The following is a 261-amino-acid chain: Cytochrome c oxidase subunit 3 (261 aa).

The Mitochondrial matrix segment spans residues 1–15 (MTHQTHAYHMVNPSP). A helical membrane pass occupies residues 16–34 (WPLTGALSALLMTSGLAMW). At 35 to 40 (FHYNSM) the chain is on the mitochondrial intermembrane side. The helical transmembrane segment at 41-66 (LLLTLGLMTNLLTMYQWWRDIVREST) threads the bilayer. Over 67-72 (FQGHHT) the chain is Mitochondrial matrix. Residues 73-105 (LVVQKGLRYGMILFIISEVFFFSGFFWAFYHSS) form a helical membrane-spanning segment. The Mitochondrial intermembrane portion of the chain corresponds to 106-128 (LAPTPELGGCWPPTGIHPLNPME). Residues 129–152 (VPLLNTSVLLASGVSITWAHHSLM) form a helical membrane-spanning segment. The Mitochondrial matrix segment spans residues 153-155 (EGN). Residues 156–183 (RKHMLQALFITISLGVYFTLLQASEYYE) traverse the membrane as a helical segment. Topologically, residues 184 to 190 (APFTISD) are mitochondrial intermembrane. Residues 191–223 (GIYGSTFFVATGFHGLHVIIGSTFLIVCFLRQL) traverse the membrane as a helical segment. Over 224–232 (KFHFTSNHH) the chain is Mitochondrial matrix. Residues 233–256 (FGFEAAAWYWHFVDVVWLFLYVSI) traverse the membrane as a helical segment. Topologically, residues 257 to 261 (YWWGS) are mitochondrial intermembrane.

Belongs to the cytochrome c oxidase subunit 3 family. Component of the cytochrome c oxidase (complex IV, CIV), a multisubunit enzyme composed of 14 subunits. The complex is composed of a catalytic core of 3 subunits MT-CO1, MT-CO2 and MT-CO3, encoded in the mitochondrial DNA, and 11 supernumerary subunits COX4I, COX5A, COX5B, COX6A, COX6B, COX6C, COX7A, COX7B, COX7C, COX8 and NDUFA4, which are encoded in the nuclear genome. The complex exists as a monomer or a dimer and forms supercomplexes (SCs) in the inner mitochondrial membrane with NADH-ubiquinone oxidoreductase (complex I, CI) and ubiquinol-cytochrome c oxidoreductase (cytochrome b-c1 complex, complex III, CIII), resulting in different assemblies (supercomplex SCI(1)III(2)IV(1) and megacomplex MCI(2)III(2)IV(2)).

The protein resides in the mitochondrion inner membrane. It catalyses the reaction 4 Fe(II)-[cytochrome c] + O2 + 8 H(+)(in) = 4 Fe(III)-[cytochrome c] + 2 H2O + 4 H(+)(out). Component of the cytochrome c oxidase, the last enzyme in the mitochondrial electron transport chain which drives oxidative phosphorylation. The respiratory chain contains 3 multisubunit complexes succinate dehydrogenase (complex II, CII), ubiquinol-cytochrome c oxidoreductase (cytochrome b-c1 complex, complex III, CIII) and cytochrome c oxidase (complex IV, CIV), that cooperate to transfer electrons derived from NADH and succinate to molecular oxygen, creating an electrochemical gradient over the inner membrane that drives transmembrane transport and the ATP synthase. Cytochrome c oxidase is the component of the respiratory chain that catalyzes the reduction of oxygen to water. Electrons originating from reduced cytochrome c in the intermembrane space (IMS) are transferred via the dinuclear copper A center (CU(A)) of subunit 2 and heme A of subunit 1 to the active site in subunit 1, a binuclear center (BNC) formed by heme A3 and copper B (CU(B)). The BNC reduces molecular oxygen to 2 water molecules using 4 electrons from cytochrome c in the IMS and 4 protons from the mitochondrial matrix. The protein is Cytochrome c oxidase subunit 3 (MT-CO3) of Ceratotherium simum (White rhinoceros).